A 475-amino-acid polypeptide reads, in one-letter code: tRNA-2-methylthio-N(6)-dimethylallyladenosine synthase (475 aa).

Residues Met-1 to Gly-10 are compositionally biased toward basic and acidic residues. The disordered stretch occupies residues Met-1 to Gly-25. Polar residues predominate over residues Ser-12 to Ala-23. Residues Gly-27 to Asp-144 form the MTTase N-terminal domain. [4Fe-4S] cluster contacts are provided by Cys-36, Cys-73, Cys-107, Cys-181, Cys-185, and Cys-188. The 234-residue stretch at Arg-167 to Ala-400 folds into the Radical SAM core domain. The region spanning Gln-403–Gly-466 is the TRAM domain.

The protein belongs to the methylthiotransferase family. MiaB subfamily. Monomer. [4Fe-4S] cluster serves as cofactor.

The protein localises to the cytoplasm. It carries out the reaction N(6)-dimethylallyladenosine(37) in tRNA + (sulfur carrier)-SH + AH2 + 2 S-adenosyl-L-methionine = 2-methylsulfanyl-N(6)-dimethylallyladenosine(37) in tRNA + (sulfur carrier)-H + 5'-deoxyadenosine + L-methionine + A + S-adenosyl-L-homocysteine + 2 H(+). Catalyzes the methylthiolation of N6-(dimethylallyl)adenosine (i(6)A), leading to the formation of 2-methylthio-N6-(dimethylallyl)adenosine (ms(2)i(6)A) at position 37 in tRNAs that read codons beginning with uridine. This is tRNA-2-methylthio-N(6)-dimethylallyladenosine synthase from Bordetella avium (strain 197N).